We begin with the raw amino-acid sequence, 380 residues long: NF-kappa-B inhibitor-like protein 1 (380 aa).

The disordered stretch occupies residues 1–34 (MSNPSPQVPEGEASTSVCRPKSSMASTSRRQRRE). A compositionally biased stretch (polar residues) spans 13 to 28 (ASTSVCRPKSSMASTS). ANK repeat units follow at residues 64–93 (GQPPPLHRACARHDAPALCLLLRLGADPAH) and 97–133 (HGDTALHAAARQGPDAYTDFFLPLLSRCPSAMGIKNK). Disordered regions lie at residues 131-167 (KNKDGETPGQILGWGPPWDSAEEEEEDEASKEREWRQ) and 185-293 (EDDA…RGSL). Phosphoserine is present on Ser150. Residues 150-159 (SAEEEEEDEA) are compositionally biased toward acidic residues. Basic and acidic residues-rich tracts occupy residues 204-221 (RMAREHAQKRQQQRETEG) and 236-272 (RQQEEEQRLFRERARAKEEELRESQARRAQEAPRDPV).

As to quaternary structure, interacts with CACTIN (via N-terminal domain); the interaction occurs in a pro-inflammatory-independent manner.

The protein localises to the nucleus. Functionally, involved in the regulation of innate immune response. Acts as negative regulator of Toll-like receptor and interferon-regulatory factor (IRF) signaling pathways. Contributes to the negative regulation of transcriptional activation of NF-kappa-B target genes in response to endogenous pro-inflammatory stimuli. The chain is NF-kappa-B inhibitor-like protein 1 (NFKBIL1) from Sus scrofa (Pig).